An 84-amino-acid chain; its full sequence is Putative defensin-like protein 114 (84 aa).

The first 24 residues, M1 to C24, serve as a signal peptide directing secretion. Intrachain disulfides connect C41–C81, C47–C69, C54–C79, and C58–C80.

This sequence belongs to the DEFL family.

The protein localises to the secreted. This is Putative defensin-like protein 114 from Arabidopsis thaliana (Mouse-ear cress).